The chain runs to 664 residues: DNA ligase (664 aa).

Residues 31 to 35, 80 to 81, and E110 contribute to the NAD(+) site; these read DSTYD and SL. The active-site N6-AMP-lysine intermediate is K112. Residues R133, E167, K282, and K306 each coordinate NAD(+). Residues C400, C403, C418, and C423 each coordinate Zn(2+). A BRCT domain is found at 583-664; it reads QSNAPLAGKT…LLEELAKYEG (82 aa).

This sequence belongs to the NAD-dependent DNA ligase family. LigA subfamily. The cofactor is Mg(2+). It depends on Mn(2+) as a cofactor.

It catalyses the reaction NAD(+) + (deoxyribonucleotide)n-3'-hydroxyl + 5'-phospho-(deoxyribonucleotide)m = (deoxyribonucleotide)n+m + AMP + beta-nicotinamide D-nucleotide.. DNA ligase that catalyzes the formation of phosphodiester linkages between 5'-phosphoryl and 3'-hydroxyl groups in double-stranded DNA using NAD as a coenzyme and as the energy source for the reaction. It is essential for DNA replication and repair of damaged DNA. This Exiguobacterium sibiricum (strain DSM 17290 / CCUG 55495 / CIP 109462 / JCM 13490 / 255-15) protein is DNA ligase.